The primary structure comprises 261 residues: Carnitinyl-CoA dehydratase (261 aa).

Glu-111 functions as the Nucleophile in the catalytic mechanism. The active-site Proton acceptor is the Glu-131.

This sequence belongs to the enoyl-CoA hydratase/isomerase family.

The enzyme catalyses (R)-carnitinyl-CoA = crotonobetainyl-CoA + H2O. It functions in the pathway amine and polyamine metabolism; carnitine metabolism. Its function is as follows. Catalyzes the reversible dehydration of L-carnitinyl-CoA to crotonobetainyl-CoA. In Escherichia coli O6:K15:H31 (strain 536 / UPEC), this protein is Carnitinyl-CoA dehydratase.